A 525-amino-acid chain; its full sequence is Pre-mRNA-processing factor 19 homolog 2 (525 aa).

Positions 1–70 (MNCAISGEVP…PKTLHTASIP (70 aa)) constitute a U-box domain. WD repeat units lie at residues 220 to 261 (TNKP…STLT), 262 to 301 (GHSKKVTSVKFVGDSDLVLTASADKTVRIWRNPGDGNYAC), 307 to 346 (DHSAEVRAVTVHPTNKYFVSASLDGTWCFYDLSSGSCLAQ), 351 to 390 (SKNVDYTAAAFHPDGLILGTGTSQSVVKIWDVKSQANVAK), 393 to 431 (GHTGEVTAISFSENGYFLATAAEDGVRLWDLRKLRNFKS), 433 to 469 (LSADANSVEFDPSGSYLGIAASDIKVYQTASVKAEWN), and 478 to 517 (SGTGKATCVKFGSDAQYVAVGSMDRNLRIFGLPGDEKANV). The DWD box signature appears at 409–424 (FLATAAEDGVRLWDLR).

It belongs to the WD repeat PRP19 family. Homotetramer. Component of the multiprotein assembly MOS4-associated complex (MAC) at least composed of MOS4, CDC5, PRL1 and PRP19 which is related to the PRP19C/Prp19 complex/NTC/Nineteen complex identified in other organisms. Associated with the spliceosome.

It localises to the nucleus. The enzyme catalyses S-ubiquitinyl-[E2 ubiquitin-conjugating enzyme]-L-cysteine + [acceptor protein]-L-lysine = [E2 ubiquitin-conjugating enzyme]-L-cysteine + N(6)-ubiquitinyl-[acceptor protein]-L-lysine.. It participates in protein modification; protein ubiquitination. In terms of biological role, probable ubiquitin-protein ligase which is mainly involved pre-mRNA splicing and DNA repair. Component of the MAC complex that probably regulates defense responses through transcriptional control and thereby is essential for plant innate immunity. This is Pre-mRNA-processing factor 19 homolog 2 (PRP19B) from Arabidopsis thaliana (Mouse-ear cress).